We begin with the raw amino-acid sequence, 125 residues long: Mini-ribonuclease 3 (125 aa).

Asp11 is a catalytic residue.

This sequence belongs to the MrnC RNase family. As to quaternary structure, homodimer. Mg(2+) serves as cofactor.

It is found in the cytoplasm. Functionally, involved in correct processing of both the 5' and 3' ends of 23S rRNA precursor. Processes 30S rRNA precursor transcript even in absence of ribonuclease 3 (Rnc); Rnc processes 30S rRNA into smaller rRNA precursors. This is Mini-ribonuclease 3 from Acholeplasma laidlawii (strain PG-8A).